The chain runs to 645 residues: MTDLPPHSSHHPADQGEPLVPAEKKQGVEAIREALKTIPYSPGVYRMLSEKGEVLYVGKALSLKKRVSSYIRINQLPERLRRMVSMTVSMEIVITRTEADALLLEANYIKRMKPRFNILLRDDKSYPWLMLTESHEFPQITKQRGKPVKGATYWGPFANAWAVNQTLNLVQRSFLLRSCSDAVLNSRTRPCLLYQIKRCSAPCVDRISKEDYAELVSEARQFLSGHSTELQQRLVAEMEQASQELNYERAASIRDRIRGFASIQGSSTINPTSINDADIMTIWQEAGQSCIQVFFIRGSRNNGNRAFYPAHAEEETAADVLSAFMIQFYDNKPPPPSILVNCELPEPKLVEEALSIRRGQKVEILRPQRGEKKDVVEHAALNAREALERKLAENTGQRRLLEGVAEVFGLPEIPQRIETYDNSHIMGQAPYGVMVVGGPEGFNKRAYRKYAIKGPVTPGDDFGMMREVMERRFGHRSENGERPEDWPDLLLIDGGLGQFNAVRAVLADLGVTGIPIVAIAKGPDRDAGREWFFTETKSPFQLPPRDPVLYYLQRLRDEAHRFAITTHRAGRSKGLRSSELDHVPGIGAARKKALLNHFGSAKSVRQASLEELENAPGISSSTATAIYGHFHPEWVQKTSADNRSH.

The segment at 1–20 (MTDLPPHSSHHPADQGEPLV) is disordered. The 79-residue stretch at 40 to 118 (YSPGVYRMLS…IKRMKPRFNI (79 aa)) folds into the GIY-YIG domain. Residues 228-263 (TELQQRLVAEMEQASQELNYERAASIRDRIRGFASI) enclose the UVR domain.

This sequence belongs to the UvrC family. Interacts with UvrB in an incision complex.

The protein localises to the cytoplasm. Functionally, the UvrABC repair system catalyzes the recognition and processing of DNA lesions. UvrC both incises the 5' and 3' sides of the lesion. The N-terminal half is responsible for the 3' incision and the C-terminal half is responsible for the 5' incision. The protein is UvrABC system protein C of Gluconobacter oxydans (strain 621H) (Gluconobacter suboxydans).